Consider the following 404-residue polypeptide: Dual-specificity RNA methyltransferase RlmN (404 aa).

The Proton acceptor role is filled by Glu119. The region spanning 126 to 358 is the Radical SAM core domain; that stretch reads VGRAGALCVS…NKAGYSSPIR (233 aa). Cys133 and Cys369 are disulfide-bonded. Cys140, Cys144, and Cys147 together coordinate [4Fe-4S] cluster. S-adenosyl-L-methionine contacts are provided by residues 195–196, Ser227, 249–251, and Asn326; these read GE and SLH. The S-methylcysteine intermediate role is filled by Cys369.

Belongs to the radical SAM superfamily. RlmN family. [4Fe-4S] cluster serves as cofactor.

It is found in the cytoplasm. It catalyses the reaction adenosine(2503) in 23S rRNA + 2 reduced [2Fe-2S]-[ferredoxin] + 2 S-adenosyl-L-methionine = 2-methyladenosine(2503) in 23S rRNA + 5'-deoxyadenosine + L-methionine + 2 oxidized [2Fe-2S]-[ferredoxin] + S-adenosyl-L-homocysteine. The catalysed reaction is adenosine(37) in tRNA + 2 reduced [2Fe-2S]-[ferredoxin] + 2 S-adenosyl-L-methionine = 2-methyladenosine(37) in tRNA + 5'-deoxyadenosine + L-methionine + 2 oxidized [2Fe-2S]-[ferredoxin] + S-adenosyl-L-homocysteine. In terms of biological role, specifically methylates position 2 of adenine 2503 in 23S rRNA and position 2 of adenine 37 in tRNAs. m2A2503 modification seems to play a crucial role in the proofreading step occurring at the peptidyl transferase center and thus would serve to optimize ribosomal fidelity. The chain is Dual-specificity RNA methyltransferase RlmN from Caulobacter sp. (strain K31).